The sequence spans 174 residues: NADH-ubiquinone oxidoreductase chain 6 (174 aa).

5 consecutive transmembrane segments (helical) span residues 1–21 (MTYVVFLLSVMFVMGFVGFSS), 24–44 (SPIYGGLGLIVSGGVGCGIVL), 46–66 (FGGSFLGLMMFLIYLGGMLVV), 86–106 (VMILGMFVLGVLMEVGLVVYM), and 151–171 (WLMVVAGWSLFVSIFIVIEIT).

It belongs to the complex I subunit 6 family. As to quaternary structure, core subunit of respiratory chain NADH dehydrogenase (Complex I) which is composed of 45 different subunits.

It localises to the mitochondrion inner membrane. The enzyme catalyses a ubiquinone + NADH + 5 H(+)(in) = a ubiquinol + NAD(+) + 4 H(+)(out). In terms of biological role, core subunit of the mitochondrial membrane respiratory chain NADH dehydrogenase (Complex I) which catalyzes electron transfer from NADH through the respiratory chain, using ubiquinone as an electron acceptor. Essential for the catalytic activity and assembly of complex I. This Oryctolagus cuniculus (Rabbit) protein is NADH-ubiquinone oxidoreductase chain 6 (MT-ND6).